The primary structure comprises 230 residues: Large ribosomal subunit protein uL1 (230 aa).

The protein belongs to the universal ribosomal protein uL1 family. In terms of assembly, part of the 50S ribosomal subunit.

Its function is as follows. Binds directly to 23S rRNA. The L1 stalk is quite mobile in the ribosome, and is involved in E site tRNA release. Functionally, protein L1 is also a translational repressor protein, it controls the translation of the L11 operon by binding to its mRNA. The polypeptide is Large ribosomal subunit protein uL1 (Lactobacillus johnsonii (strain CNCM I-12250 / La1 / NCC 533)).